We begin with the raw amino-acid sequence, 213 residues long: Isomeliandiol synthase MOI2 (213 aa).

Helical transmembrane passes span 18 to 38 (AALH…SWFI), 52 to 72 (VLCW…YYVF), 109 to 129 (IESM…YALA), 137 to 157 (ILQF…FLSA), and 171 to 191 (YWAY…LIAI). Positions 48-190 (MDRVVLCWWA…IWVIVPALIA (143 aa)) constitute an EXPERA domain.

The protein belongs to the EBP family. In terms of tissue distribution, mainly expressed in petioles.

The protein localises to the membrane. It carries out the reaction 7,8-epoxymelianol = isomeliandiol. Its pathway is secondary metabolite biosynthesis; terpenoid biosynthesis. Isomerase involved in the biosynthesis of limonoids triterpene natural products such as azadirachtin, an antifeedant widely used as bioinsecticide, and possessing many medicinal applications including anti-tumoral, anti-malarial, anti-rheumatic, antibacterial, anti-inflammatory, anti-pyretic and diuretic effects. Catalyzes the conversion of 7,8-epoxymelianol to isomeliandiol via skeletal rearrangements. This is Isomeliandiol synthase MOI2 from Melia azedarach (Chinaberry tree).